We begin with the raw amino-acid sequence, 192 residues long: Ethylene-responsive transcription factor ERF027 (192 aa).

The AP2/ERF DNA-binding region spans 18 to 74 (VYRGIRCRSGKWVSEIREPRKTTRIWLGTYPMAEMAAAAYDVAAMALKGREAVLNFP). Disordered regions lie at residues 104 to 132 (CEEG…HVDN) and 167 to 192 (APPS…LWGY). Residues 179–192 (DSPENSNDEDLWGY) show a composition bias toward acidic residues.

It belongs to the AP2/ERF transcription factor family. ERF subfamily.

It is found in the nucleus. Functionally, probably acts as a transcriptional activator. Binds to the GCC-box pathogenesis-related promoter element. May be involved in the regulation of gene expression by stress factors and by components of stress signal transduction pathways. The chain is Ethylene-responsive transcription factor ERF027 (ERF027) from Arabidopsis thaliana (Mouse-ear cress).